The following is a 320-amino-acid chain: Malate dehydrogenase (320 aa).

NAD(+) is bound by residues 10–15 (GAGQIG) and Asp-34. Substrate is bound by residues Arg-83 and Arg-89. Residues Asn-96 and 119–121 (ITN) contribute to the NAD(+) site. Asn-121 and Arg-152 together coordinate substrate. His-176 (proton acceptor) is an active-site residue.

It belongs to the LDH/MDH superfamily. MDH type 3 family.

The catalysed reaction is (S)-malate + NAD(+) = oxaloacetate + NADH + H(+). In terms of biological role, catalyzes the reversible oxidation of malate to oxaloacetate. In Dinoroseobacter shibae (strain DSM 16493 / NCIMB 14021 / DFL 12), this protein is Malate dehydrogenase.